An 815-amino-acid chain; its full sequence is MNKFVSQSTIDTFFDGEHADPFSVLGMHETSNGIEVRVLLPDAEKVFVLSKETKNVLCELLRVDERGFFAGVVPNTHSFFAYQLEVYWGNEAQVIEDPYAFHPMINELDNWLLAEGSHKRPYEILGAHFTECDNVAGVNFRLWAPNAKRVSVVGDFNYWDGRRHPMRFHQSSGIWELFLPKVSLGQLYKFELLDCHNQLRLKADPYAFSSQLRPDTASQIGALPEIVSMTEKRRKANQADQPISIYEVHLGSWRRNLENNFWLDYDQIAEELIPYVKDMGFTHIELLPLSEFPFDGSWGYQPIGLYSPTSRFGTAEGFKRLVNKAHKAGINVILDWVPGHFPSDTHGLVAFDGTALYEHADPKEGYHQDWNTLIYNYGRHEVKNYLASNALYWMERFGLDGIRVDAVASMIYRDYSREDGQWIPNQYGGRENLEAIEFLKQTNHLLGTEIPGVVSIAEESTSFAGVTHPPYEGGLGFHFKWNMGWMNDTLSYMKKDPIYRQHHHSQMTFGMVYQYSENFILPLSHDEVVHGKCSLLGKMPGDAWQKFANLRAYYGYMWGYPGKKLLFMGNEFAQGREWNYQESLDWYLLDEFHGGGWHKAIQDYVRDLNHIYQKNAPLFELDTDPQGFEWLVVDDYQNSVFVFERRSKKDERIIVVSNFTPVLRQNYRFGVNIAGEYLEILNSDAQQYMGSNSTNTSKIVTEDIESHNKAQSISIDIPPLATVYLKLHKVKKVRKMRKTSKVEDTAVKTEKKIAKGKTTRTKKTVADTVSEATEVKPKKTVTKRAVVKKVKNEESAVFPNAEVIAESTSVENNVS.

The active-site Nucleophile is the Asp-405. Glu-458 functions as the Proton donor in the catalytic mechanism.

The protein belongs to the glycosyl hydrolase 13 family. GlgB subfamily. In terms of assembly, monomer.

The catalysed reaction is Transfers a segment of a (1-&gt;4)-alpha-D-glucan chain to a primary hydroxy group in a similar glucan chain.. It participates in glycan biosynthesis; glycogen biosynthesis. Its function is as follows. Catalyzes the formation of the alpha-1,6-glucosidic linkages in glycogen by scission of a 1,4-alpha-linked oligosaccharide from growing alpha-1,4-glucan chains and the subsequent attachment of the oligosaccharide to the alpha-1,6 position. This chain is 1,4-alpha-glucan branching enzyme GlgB, found in Histophilus somni (strain 2336) (Haemophilus somnus).